Reading from the N-terminus, the 580-residue chain is Probable RNA-binding protein CG14230 (580 aa).

Residues 4–81 (TRFFLADLPT…EKLRVSLAKE (78 aa)) form the RRM domain. Residues 89–100 (REREENQRREQG) are compositionally biased toward basic and acidic residues. Disordered stretches follow at residues 89–131 (RERE…EDEE) and 173–211 (QHRKAAKQKPDANVSQAEQKRKESLNKMRQGHQQKKSAI). Polar residues predominate over residues 110-120 (PSSQLLVQSGQ). S231 carries the phosphoserine modification. Composition is skewed to acidic residues over residues 254–263 (ENDDDEEEEQ) and 298–313 (NEEEEAELEDQPEPEE). Disordered stretches follow at residues 254–316 (ENDD…ESER), 333–395 (SAND…SAVS), and 463–520 (PFSY…IPRN). 2 stretches are compositionally biased toward basic and acidic residues: residues 348 to 358 (LRFDPAKEGHQ) and 365 to 377 (QPKEEEEKKEETS). Over residues 386-395 (AGNSQASAVS) the composition is skewed to polar residues. At S468 the chain carries Phosphoserine. T475 carries the post-translational modification Phosphothreonine.

This chain is Probable RNA-binding protein CG14230, found in Drosophila melanogaster (Fruit fly).